A 137-amino-acid chain; its full sequence is Protein archease (137 aa).

Asp11, Asp136, and Ile137 together coordinate Ca(2+).

The protein belongs to the archease family.

Activates the tRNA-splicing ligase complex by facilitating the enzymatic turnover of catalytic subunit RtcB. Acts by promoting the guanylylation of RtcB, a key intermediate step in tRNA ligation. Can also alter the NTP specificity of RtcB such that ATP, dGTP or ITP is used efficiently. This chain is Protein archease, found in Archaeoglobus fulgidus (strain ATCC 49558 / DSM 4304 / JCM 9628 / NBRC 100126 / VC-16).